The sequence spans 217 residues: Dephospho-CoA kinase (217 aa).

In terms of domain architecture, DPCK spans 2-217 (VIGLTGGIAS…RELARIEEQK (216 aa)). 10–15 (ASGKST) lines the ATP pocket.

Belongs to the CoaE family.

The protein resides in the cytoplasm. The catalysed reaction is 3'-dephospho-CoA + ATP = ADP + CoA + H(+). Its pathway is cofactor biosynthesis; coenzyme A biosynthesis; CoA from (R)-pantothenate: step 5/5. Functionally, catalyzes the phosphorylation of the 3'-hydroxyl group of dephosphocoenzyme A to form coenzyme A. The sequence is that of Dephospho-CoA kinase from Lactococcus lactis subsp. lactis (strain IL1403) (Streptococcus lactis).